Here is a 968-residue protein sequence, read N- to C-terminus: Alanine--tRNA ligase, cytoplasmic (968 aa).

Position 1 is an N-acetylmethionine (M1). A phosphoserine mark is found at S3 and S8. K19 carries the N6-acetyllysine modification. Residues R77, H95, W176, and 214 to 216 (IWN) contribute to the ATP site. Residues N216 and D239 each contribute to the L-alanine site. Residue G243 participates in ATP binding. A phosphoserine mark is found at S399 and S555. Positions 605, 609, 723, and 727 each coordinate Zn(2+). The short motif at 750–763 (RRIVAVTGAEAQKA) is the Nuclear localization signal element. K876 carries the N6-acetyllysine modification. At K943 the chain carries N6,N6,N6-trimethyllysine; alternate. N6,N6-dimethyllysine; alternate is present on K943. K943 is modified (N6-methyllysine; alternate).

This sequence belongs to the class-II aminoacyl-tRNA synthetase family. In terms of assembly, monomer. Interacts with ANKRD16; the interaction is direct. Zn(2+) is required as a cofactor. ISGylated. Post-translationally, methylation at 'Lys-943' by METTL21C.

The protein localises to the cytoplasm. Its subcellular location is the nucleus. The catalysed reaction is tRNA(Ala) + L-alanine + ATP = L-alanyl-tRNA(Ala) + AMP + diphosphate. It catalyses the reaction (S)-lactate + ATP + H(+) = (S)-lactoyl-AMP + diphosphate. The enzyme catalyses (S)-lactoyl-AMP + L-lysyl-[protein] = N(6)-[(S)-lactoyl]-L-lysyl-[protein] + AMP + 2 H(+). With respect to regulation, the protein lactyltransferase activity is inhibited by beta-alanine. Catalyzes the attachment of alanine to tRNA(Ala) in a two-step reaction: alanine is first activated by ATP to form Ala-AMP and then transferred to the acceptor end of tRNA(Ala). Also edits incorrectly charged tRNA(Ala) via its editing domain. In presence of high levels of lactate, also acts as a protein lactyltransferase that mediates lactylation of lysine residues in target proteins, such as TEAD1, TP53/p53 and YAP1. Protein lactylation takes place in a two-step reaction: lactate is first activated by ATP to form lactate-AMP and then transferred to lysine residues of target proteins. Acts as an inhibitor of TP53/p53 activity by catalyzing lactylation of TP53/p53. Acts as a positive regulator of the Hippo pathway by mediating lactylation of TEAD1 and YAP1. This Pongo abelii (Sumatran orangutan) protein is Alanine--tRNA ligase, cytoplasmic (AARS1).